Reading from the N-terminus, the 315-residue chain is Manganese-dependent 2,3-dihydroxybiphenyl 1,2-dioxygenase (315 aa).

VOC domains are found at residues 7 to 121 (KFGH…IYYD) and 150 to 273 (RIDH…LFSG). 3 residues coordinate Mn(2+): His153, His216, and Glu269.

The protein belongs to the extradiol ring-cleavage dioxygenase family. In terms of assembly, homotetramer. Mn(2+) serves as cofactor.

It catalyses the reaction biphenyl-2,3-diol + O2 = 2-hydroxy-6-oxo-6-phenylhexa-2,4-dienoate + H(+). Its pathway is xenobiotic degradation; biphenyl degradation; 2-hydroxy-2,4-pentadienoate and benzoate from biphenyl: step 3/4. In terms of biological role, catalyzes the meta-cleavage of the hydroxylated biphenyl ring. The enzyme can oxidize a wide range of substrates, and the substrate preference order is 2,3-dihydroxybiphenyl &gt; 3-methylcatechol &gt; catechol &gt; 4-methylcatechol &gt; 4-chlorocatechol. In Geobacillus genomosp. 3, this protein is Manganese-dependent 2,3-dihydroxybiphenyl 1,2-dioxygenase (bphC).